Here is a 474-residue protein sequence, read N- to C-terminus: MSFNSTSKELIEQNINGLLSIHDSWLRISMDSVANITNGFAFKSSEFNNRKDGVPLIRIRDVLKGNTSTYYSGQIPEGYWVYPEDLIVGMDGDFNATIWCSEPALLNQRVCKIEVQEDKYNKRFFYHALPGYLSAINANTSSVTVKHLSSRTLQDTLLPLPPLAEQKIIAEKLDTLLAQVDSTKARLEQIPQILKRFRQAVLAAAVTGRLTKEDKDFITKKVELDNYKILIPEDWSETILNNIINTQRPLCYGVVQPGDDIKDGIELIRVCDINDGEVDLNHLRKISKEIDLQYKRSKVRKNDILVTIVGAIGRIGIVREDINVNIARAVARISPEYKIIVPMFLHIWLSSPVMQTWLVQSSKEVARKTLNLKDLKNAFVPLPSIEEQHEIVRRVEQLFAYADSIEKQVNNALARVNNLTQSILAKAFRGELTAQWRAENPDLISGENSAAALLEKIKAERAASGGKKASRKKF.

This sequence belongs to the type-I restriction system S methylase family. The type I restriction/modification system is composed of three polypeptides R, M and S. The restriction enzyme has stoichiometry R(2)M(2)S(1) while the methyltransferase is M(2)S(1).

Functionally, the specificity (S) subunit of a type I restriction enzyme; this subunit dictates DNA sequence specificity. The M and S subunits together form a methyltransferase (MTase) that methylates A-3 on the top strand and A-4 on the bottom strand of the sequence 5'-TGAN(8)TGCT-3'. In the presence of the R subunit the complex can also act as an endonuclease, binding to the same target sequence but cutting the DNA some distance from this site. Whether the DNA is cut or modified depends on the methylation state of the target sequence. When the target site is unmodified, the DNA is cut. When the target site is hemimethylated, the complex acts as a maintenance MTase modifying the DNA so that both strands become methylated. After locating a non-methylated recognition site, the enzyme complex serves as a molecular motor that translocates DNA in an ATP-dependent manner until a collision occurs that triggers cleavage. The protein is Type I restriction enzyme EcoBI specificity subunit of Escherichia coli.